Reading from the N-terminus, the 117-residue chain is Holo-[acyl-carrier-protein] synthase (117 aa).

Mg(2+)-binding residues include aspartate 8 and glutamate 58.

It belongs to the P-Pant transferase superfamily. AcpS family. Requires Mg(2+) as cofactor.

The protein resides in the cytoplasm. It catalyses the reaction apo-[ACP] + CoA = holo-[ACP] + adenosine 3',5'-bisphosphate + H(+). Functionally, transfers the 4'-phosphopantetheine moiety from coenzyme A to a Ser of acyl-carrier-protein. This chain is Holo-[acyl-carrier-protein] synthase, found in Enterococcus faecalis (strain ATCC 700802 / V583).